The primary structure comprises 1173 residues: DNA-directed RNA polymerase subunit beta (1173 aa).

It belongs to the RNA polymerase beta chain family. As to quaternary structure, the RNAP catalytic core consists of 2 alpha, 1 beta, 1 beta' and 1 omega subunit. When a sigma factor is associated with the core the holoenzyme is formed, which can initiate transcription.

It catalyses the reaction RNA(n) + a ribonucleoside 5'-triphosphate = RNA(n+1) + diphosphate. DNA-dependent RNA polymerase catalyzes the transcription of DNA into RNA using the four ribonucleoside triphosphates as substrates. In Kosmotoga olearia (strain ATCC BAA-1733 / DSM 21960 / TBF 19.5.1), this protein is DNA-directed RNA polymerase subunit beta.